Reading from the N-terminus, the 198-residue chain is C4b-binding protein beta chain (198 aa).

Positions 1–17 (MFFWLMCYLVDVWLISA) are cleaved as a signal peptide. The Sushi 1; atypical; lacks a Cys domain occupies 22–77 (HCPDPLLVTDEFSSLEPVNVNDTFMFKCNEHCIFKGSNWSQCRENHTRVTHSPVSK). Residues Asn42, Asn59, and Asn66 are each glycosylated (N-linked (GlcNAc...) asparagine). Residues 79-135 (RDCGPPETPTHGYFEGRDFKSGSTITYYCEARYRLVGTQHQQCIDGEWTSAPPICEL) form the Sushi 2 domain. Cystine bridges form between Cys81–Cys121 and Cys107–Cys133.

In terms of assembly, disulfide-linked complex of alpha and beta chains.

It is found in the secreted. Functionally, controls the classical pathway of complement activation. It binds as a cofactor to C3b/C4b inactivator (C3bINA), which then hydrolyzes the complement fragment C4b. It also accelerates the degradation of the C4bC2a complex (C3 convertase) by dissociating the complement fragment C2a. It also interacts with serum amyloid P component. In Bos taurus (Bovine), this protein is C4b-binding protein beta chain (C4BPB).